Reading from the N-terminus, the 358-residue chain is MQKNDDLLRERRKDEHVALGVKQNEQLAPSSLDDIQLIGTSIPRYNVKDIDLTTTIFGVNVSLPFYINAMTGGSRHTKKINADLAEIAREVAIPMAVGSQSAALKNSSLMDTYQIVREVNPSGIIMANVSPEVAVQDGLRAIEMLEANALQIHINPAQELVMQEGDRSFSHWLARIEEYVKRSPVPIIVKEVGFGMTRETVKTLREVGVETVDLAGKGGTNFAQIENDRRRDQAYDFLLDWGISTGQSLIDMQHIDAPKIAYLASGGIRNPLDIVKSLALGADSVGMAGQIIYSLKKDGVSNTIEKLELWKEQLRGLFVLADAKNIAELKETSLIVNGKLAEWGNVRGIDLVQLANRK.

12–13 (RK) provides a ligand contact to substrate. FMN-binding positions include 69-71 (AMT), Ser99, and Asn128. Residue Gln158 participates in substrate binding. Residue Glu159 coordinates Mg(2+). Residues Lys190, Thr220, 267–269 (GIR), and 288–289 (AG) contribute to the FMN site.

Belongs to the IPP isomerase type 2 family. Homooctamer. Dimer of tetramers. Requires FMN as cofactor. NADPH is required as a cofactor. The cofactor is Mg(2+).

The protein localises to the cytoplasm. The enzyme catalyses isopentenyl diphosphate = dimethylallyl diphosphate. Functionally, involved in the biosynthesis of isoprenoids. Catalyzes the 1,3-allylic rearrangement of the homoallylic substrate isopentenyl (IPP) to its allylic isomer, dimethylallyl diphosphate (DMAPP). The chain is Isopentenyl-diphosphate delta-isomerase from Listeria welshimeri serovar 6b (strain ATCC 35897 / DSM 20650 / CCUG 15529 / CIP 8149 / NCTC 11857 / SLCC 5334 / V8).